Here is a 266-residue protein sequence, read N- to C-terminus: GTP-binding protein Rhes (266 aa).

26–33 (GASRVGKS) contributes to the GTP binding site. The short motif at 48–56 (YTPTIEDFH) is the Effector region element. Residues 73 to 77 (DTSGN) and 140 to 143 (NKND) each bind GTP. Residues 189–235 (MAKLPHEMSPALHHKISVQYGDAFHPRPFCMRRTKVAGAYGMVSPFA) are interaction with GNB1, GNB2 and GNB3. Residue Cys263 is modified to Cysteine methyl ester. The S-farnesyl cysteine moiety is linked to residue Cys263. Positions 264 to 266 (SIQ) are cleaved as a propeptide — removed in mature form.

It belongs to the small GTPase superfamily. RasD family. As to quaternary structure, monomer (Potential). Interacts with PIK3CA and UBE2I. Interacts with GNB1, GNB2 and GNB3. Post-translationally, farnesylated. Farnesylation is required for membrane targeting. In terms of tissue distribution, highly expressed in brain; prominently in the striatum and weakly in kidney, thyroid, lung, heart and testis. Not expressed in liver. Expressed in pancreatic cell lines and in a embryonic stem cell line.

The protein resides in the cell membrane. Its function is as follows. GTPase signaling protein that binds to and hydrolyzes GTP. Regulates signaling pathways involving G-proteins-coupled receptor and heterotrimeric proteins such as GNB1, GNB2 and GNB3. May be involved in selected striatal competencies, mainly locomotor activity and motor coordination. The polypeptide is GTP-binding protein Rhes (Rasd2) (Mus musculus (Mouse)).